A 206-amino-acid polypeptide reads, in one-letter code: Pyridoxine/pyridoxamine 5'-phosphate oxidase (206 aa).

Residues 53-58 (RMVLLK), 68-69 (YT), lysine 75, and glutamine 97 each bind FMN. Lysine 58 is a substrate binding site. Positions 115, 119, and 123 each coordinate substrate. FMN-binding positions include 132–133 (QS) and tryptophan 177. 183 to 185 (RLH) contributes to the substrate binding site. An FMN-binding site is contributed by arginine 187.

It belongs to the pyridoxamine 5'-phosphate oxidase family. Homodimer. FMN serves as cofactor.

It catalyses the reaction pyridoxamine 5'-phosphate + O2 + H2O = pyridoxal 5'-phosphate + H2O2 + NH4(+). The enzyme catalyses pyridoxine 5'-phosphate + O2 = pyridoxal 5'-phosphate + H2O2. It participates in cofactor metabolism; pyridoxal 5'-phosphate salvage; pyridoxal 5'-phosphate from pyridoxamine 5'-phosphate: step 1/1. It functions in the pathway cofactor metabolism; pyridoxal 5'-phosphate salvage; pyridoxal 5'-phosphate from pyridoxine 5'-phosphate: step 1/1. Its function is as follows. Catalyzes the oxidation of either pyridoxine 5'-phosphate (PNP) or pyridoxamine 5'-phosphate (PMP) into pyridoxal 5'-phosphate (PLP). The chain is Pyridoxine/pyridoxamine 5'-phosphate oxidase from Agrobacterium fabrum (strain C58 / ATCC 33970) (Agrobacterium tumefaciens (strain C58)).